Consider the following 1187-residue polypeptide: Protein WWC2 (1187 aa).

WW domains are found at residues 10-43 and 57-90; these read LPLP…DPRD and DELP…DPRK. Coiled-coil stretches lie at residues 121 to 194 and 224 to 256; these read KEQR…YKQQ and ELKS…FHLD. Ser-286 carries the phosphoserine modification. Positions 302-423 form a coiled coil; that stretch reads LAEKVRLSLQ…EETTKLTTSL (122 aa). The interval 438–464 is disordered; it reads SSGSSLGSLASSRGSLNTSSRGSLNSL. The C2 domain occupies 697 to 820; the sequence is ETAQVQIGLR…FSNEIFMLWY (124 aa). Disordered regions lie at residues 830–849 and 874–963; these read CKKN…QPML and ELAQ…ETNT. The stretch at 859–885 forms a coiled coil; the sequence is ALLARTSAELLAVEQELAQEEEEEELR. Residues 875–884 show a composition bias toward acidic residues; sequence LAQEEEEEEL. Position 999 is a phosphothreonine (Thr-999). Ser-1017 carries the post-translational modification Phosphoserine. An interaction with PRKCZ region spans residues 1026–1045; the sequence is SLFVRNSTERRSLRVKRAVC. The stretch at 1063–1143 forms a coiled coil; sequence DLELDLQASL…DLNAERLMRQ (81 aa).

It belongs to the WWC family. In terms of assembly, forms homodimers and heterodimers with WWC1 and WWC3. Interacts with DLC1 and PRKCZ. Interacts (via WW domains) with LATS1 and LATS2.

It localises to the cytoplasm. The protein localises to the cytosol. Functionally, regulator of the Hippo signaling pathway, also known as the Salvador-Warts-Hippo (SWH) pathway. Enhances phosphorylation of LATS1 and YAP1 and negatively regulates cell proliferation and organ growth due to a suppression of the transcriptional activity of YAP1, the major effector of the Hippo pathway. The chain is Protein WWC2 (Wwc2) from Mus musculus (Mouse).